The chain runs to 338 residues: Lipoate-protein ligase A (338 aa).

Residues 29-216 (PATQRVLFLW…AFFAHYGERV (188 aa)) form the BPL/LPL catalytic domain. ATP contacts are provided by residues Arg71, 76–79 (GAVF), and Lys134. Lys134 provides a ligand contact to (R)-lipoate.

Belongs to the LplA family. As to quaternary structure, monomer.

The protein localises to the cytoplasm. It catalyses the reaction L-lysyl-[lipoyl-carrier protein] + (R)-lipoate + ATP = N(6)-[(R)-lipoyl]-L-lysyl-[lipoyl-carrier protein] + AMP + diphosphate + H(+). It functions in the pathway protein modification; protein lipoylation via exogenous pathway; protein N(6)-(lipoyl)lysine from lipoate: step 1/2. The protein operates within protein modification; protein lipoylation via exogenous pathway; protein N(6)-(lipoyl)lysine from lipoate: step 2/2. Catalyzes both the ATP-dependent activation of exogenously supplied lipoate to lipoyl-AMP and the transfer of the activated lipoyl onto the lipoyl domains of lipoate-dependent enzymes. The chain is Lipoate-protein ligase A from Salmonella paratyphi B (strain ATCC BAA-1250 / SPB7).